A 502-amino-acid polypeptide reads, in one-letter code: Glucose-6-phosphate isomerase (502 aa).

Catalysis depends on Glu-331, which acts as the Proton donor. Residues His-362 and Lys-471 contribute to the active site.

It belongs to the GPI family.

The protein resides in the cytoplasm. The catalysed reaction is alpha-D-glucose 6-phosphate = beta-D-fructose 6-phosphate. It functions in the pathway carbohydrate biosynthesis; gluconeogenesis. The protein operates within carbohydrate degradation; glycolysis; D-glyceraldehyde 3-phosphate and glycerone phosphate from D-glucose: step 2/4. Its function is as follows. Catalyzes the reversible isomerization of glucose-6-phosphate to fructose-6-phosphate. The sequence is that of Glucose-6-phosphate isomerase from Xylella fastidiosa (strain M12).